Consider the following 209-residue polypeptide: Protein TIC 20-v, chloroplastic (209 aa).

The transit peptide at 1-49 (MAIISQFFAPLPSLTGTLTLTGRSFLPLNLDTQFPKPRLSRDRAATLVL) directs the protein to the chloroplast. 4 helical membrane-spanning segments follow: residues 63 to 83 (IISA…GKFI), 103 to 123 (AFKS…FVVV), 132 to 152 (VRFN…PDLL), and 173 to 193 (TVFL…LFGL).

The protein belongs to the Tic20 family. As to quaternary structure, part of the Tic complex. Expressed in leaves, siliques and roots.

It localises to the plastid. It is found in the chloroplast inner membrane. Functionally, may be involved in protein precursor import into chloroplasts. Not redundant with TIC20-I, TIC20-II or TIC20-IV. This chain is Protein TIC 20-v, chloroplastic (TIC20-V), found in Arabidopsis thaliana (Mouse-ear cress).